Consider the following 467-residue polypeptide: ATP synthase subunit beta (467 aa).

Gly152–Thr159 provides a ligand contact to ATP.

The protein belongs to the ATPase alpha/beta chains family. As to quaternary structure, F-type ATPases have 2 components, CF(1) - the catalytic core - and CF(0) - the membrane proton channel. CF(1) has five subunits: alpha(3), beta(3), gamma(1), delta(1), epsilon(1). CF(0) has three main subunits: a(1), b(2) and c(9-12). The alpha and beta chains form an alternating ring which encloses part of the gamma chain. CF(1) is attached to CF(0) by a central stalk formed by the gamma and epsilon chains, while a peripheral stalk is formed by the delta and b chains.

It localises to the cell membrane. It carries out the reaction ATP + H2O + 4 H(+)(in) = ADP + phosphate + 5 H(+)(out). Its function is as follows. Produces ATP from ADP in the presence of a proton gradient across the membrane. The catalytic sites are hosted primarily by the beta subunits. The polypeptide is ATP synthase subunit beta (Caldicellulosiruptor saccharolyticus (strain ATCC 43494 / DSM 8903 / Tp8T 6331)).